The sequence spans 113 residues: MNTVRVTFLLVFVLAVSLGQADKDENRMEMQEKAEQGKSYLDFAENLLLQKLEELEAKLLEEDSEESRNSRQKRCIGEGVPCDENDPRCCSGLVCLKPTLHGIWYKSYYCYKK.

The signal sequence occupies residues 1–21 (MNTVRVTFLLVFVLAVSLGQA). A propeptide spanning residues 22–74 (DKDENRMEMQEKAEQGKSYLDFAENLLLQKLEELEAKLLEEDSEESRNSRQKR) is cleaved from the precursor. 3 disulfide bridges follow: cysteine 75–cysteine 90, cysteine 82–cysteine 95, and cysteine 89–cysteine 110.

This sequence belongs to the neurotoxin 14 (magi-1) family. 01 (HNTX-16) subfamily. As to expression, expressed by the venom gland.

The protein localises to the secreted. Functionally, probable ion channel inhibitor. The polypeptide is U11-theraphotoxin-Hhn1a (Cyriopagopus hainanus (Chinese bird spider)).